We begin with the raw amino-acid sequence, 594 residues long: Proline--tRNA ligase (594 aa).

Belongs to the class-II aminoacyl-tRNA synthetase family. ProS type 1 subfamily. In terms of assembly, homodimer.

The protein localises to the cytoplasm. The catalysed reaction is tRNA(Pro) + L-proline + ATP = L-prolyl-tRNA(Pro) + AMP + diphosphate. Its function is as follows. Catalyzes the attachment of proline to tRNA(Pro) in a two-step reaction: proline is first activated by ATP to form Pro-AMP and then transferred to the acceptor end of tRNA(Pro). As ProRS can inadvertently accommodate and process non-cognate amino acids such as alanine and cysteine, to avoid such errors it has two additional distinct editing activities against alanine. One activity is designated as 'pretransfer' editing and involves the tRNA(Pro)-independent hydrolysis of activated Ala-AMP. The other activity is designated 'posttransfer' editing and involves deacylation of mischarged Ala-tRNA(Pro). The misacylated Cys-tRNA(Pro) is not edited by ProRS. The sequence is that of Proline--tRNA ligase from Synechococcus sp. (strain WH7803).